The sequence spans 119 residues: Ribonuclease P protein component (119 aa).

This sequence belongs to the RnpA family. As to quaternary structure, consists of a catalytic RNA component (M1 or rnpB) and a protein subunit.

The catalysed reaction is Endonucleolytic cleavage of RNA, removing 5'-extranucleotides from tRNA precursor.. Its function is as follows. RNaseP catalyzes the removal of the 5'-leader sequence from pre-tRNA to produce the mature 5'-terminus. It can also cleave other RNA substrates such as 4.5S RNA. The protein component plays an auxiliary but essential role in vivo by binding to the 5'-leader sequence and broadening the substrate specificity of the ribozyme. The protein is Ribonuclease P protein component of Bifidobacterium longum (strain DJO10A).